The sequence spans 369 residues: MTSILGSARPLIQVGPKSRNASTSMSRLPSFPTTRPCRRAPCSSSSYATISPTAPRSSQRNPTNASRHPRIDEVDHIPTSALGRVLLTAGSALGLLNNPSRGDLLSMLTQVSSGPSLAHLLESMRSTESGRRLLIERPSVNSETVDVDYLASLERGKFGREWIEWLKDNGVGPDGRAEADYMTTLEHKYLIQRYRESHDFYHLLLRMPVTQLGETVVKYFELAQMNMPVAGFAAAGGTLRILASSLSALPKPSQLISAALNRSPAPETAHQPPSSADLSALQTLIPWAMQVGSSSVPLISIEWERCWERDIEEMRREFRITSPPIQVAKFSGRAKKGGKRRGWPSKILEHQKAQHQQQQQQQKVDESRN.

The transit peptide at 1 to 28 directs the protein to the mitochondrion; that stretch reads MTSILGSARPLIQVGPKSRNASTSMSRL. The tract at residues 1 to 70 is disordered; sequence MTSILGSARP…NPTNASRHPR (70 aa). 2 stretches are compositionally biased toward polar residues: residues 19 to 33 and 47 to 66; these read RNASTSMSRLPSFPT and YATISPTAPRSSQRNPTNAS. Zn(2+)-binding residues include H198, D199, H202, and E214. A disordered region spans residues 330 to 369; sequence FSGRAKKGGKRRGWPSKILEHQKAQHQQQQQQQKVDESRN. The span at 332-343 shows a compositional bias: basic residues; sequence GRAKKGGKRRGW.

This sequence belongs to the COQ4 family. In terms of assembly, component of a multi-subunit COQ enzyme complex, composed of at least COQ3, COQ4, COQ5, COQ6, COQ7 and COQ9. It depends on Zn(2+) as a cofactor.

Its subcellular location is the mitochondrion inner membrane. The catalysed reaction is a 4-hydroxy-3-methoxy-5-(all-trans-polyprenyl)benzoate + H(+) = a 2-methoxy-6-(all-trans-polyprenyl)phenol + CO2. Its pathway is cofactor biosynthesis; ubiquinone biosynthesis. Functionally, lyase that catalyzes the C1-decarboxylation of 4-hydroxy-3-methoxy-5-(all-trans-polyprenyl)benzoic acid into 2-methoxy-6-(all-trans-polyprenyl)phenol during ubiquinone biosynthesis. This chain is Ubiquinone biosynthesis protein COQ4, mitochondrial, found in Mycosarcoma maydis (Corn smut fungus).